The following is an 81-amino-acid chain: uncharacterized protein (81 aa).

As to expression, expressed in fetal brain.

This is an uncharacterized protein from Homo sapiens (Human).